A 386-amino-acid chain; its full sequence is Myosin light chain kinase family member 4 (386 aa).

Position 100 is a phosphoserine (Ser-100). Residues 107-361 form the Protein kinase domain; that stretch reads VSKSEILGGG…ASEALKHPWL (255 aa). ATP-binding positions include 113 to 121 and Lys-136; that span reads LGGGRFGQV. Catalysis depends on Asp-227, which acts as the Proton acceptor.

The protein belongs to the protein kinase superfamily. CAMK Ser/Thr protein kinase family.

The catalysed reaction is L-seryl-[protein] + ATP = O-phospho-L-seryl-[protein] + ADP + H(+). It carries out the reaction L-threonyl-[protein] + ATP = O-phospho-L-threonyl-[protein] + ADP + H(+). The chain is Myosin light chain kinase family member 4 (Mylk4) from Mus musculus (Mouse).